The following is a 505-amino-acid chain: Maturase K (505 aa).

It belongs to the intron maturase 2 family. MatK subfamily.

It localises to the plastid. The protein localises to the chloroplast. Its function is as follows. Usually encoded in the trnK tRNA gene intron. Probably assists in splicing its own and other chloroplast group II introns. The chain is Maturase K from Elaeagnus umbellata (Autumn olive).